We begin with the raw amino-acid sequence, 544 residues long: Cannabidiolic acid synthase (544 aa).

Positions 1 to 28 (MKCSTFSFWFVCKIIFFFFSFNIQTSIA) are cleaved as a signal peptide. C37 and C99 are joined by a disulfide. 2 N-linked (GlcNAc...) asparagine glycosylation sites follow: N45 and N65. Positions 77–251 (TTPKPLVIVT…VAWKIRLVAV (175 aa)) constitute an FAD-binding PCMH-type domain. Residues 109–115 (TRSGGHD) and S120 each bind FAD. Residues 114 to 176 (HDSEGMSYIS…ENLSLAAGYC (63 aa)) constitute a cross-link (6-(S-cysteinyl)-8alpha-(pros-histidyl)-FAD (His-Cys)). N168 is a glycosylation site (N-linked (GlcNAc...) asparagine). FAD contacts are provided by residues C176, 180–184 (CAGGH), Y190, E236, and I241. A cannabigerolate-binding site is contributed by H291. N-linked (GlcNAc...) asparagine glycosylation is found at N296, N304, and N328. Cannabigerolate is bound by residues Y416 and E441. 480 to 482 (YLN) is a binding site for FAD. Y483 (proton acceptor) is an active-site residue. N498 is a glycosylation site (N-linked (GlcNAc...) asparagine).

The protein belongs to the oxygen-dependent FAD-linked oxidoreductase family. Monomer. The cofactor is FAD. In terms of processing, glycosylated. The FAD cofactor is bound via a bicovalent 6-S-cysteinyl, 8alpha-N1-histidyl FAD linkage. As to expression, expressed in young leaves.

It localises to the secreted. The protein resides in the extracellular space. It is found in the apoplast. The enzyme catalyses cannabigerolate + O2 = cannabidiolate + H2O2. The protein operates within secondary metabolite biosynthesis; terpenoid biosynthesis. Inhibited by Hg(2+). Its function is as follows. Oxidoreductase involved in the biosynthesis of cannabinoids-related terpenophenolic natural products, which have pharmacological activity. Catalyzes the stereoselective oxidative cyclization of the monoterpene moiety in cannabigerolic acid (CBGA), producing cannabidiolate (CBDA), the major cannabioid in fiber-type Cannabis plants. Can also use cannabinerolic acid as substrate, but not cannabigerol or cannabinerol. This chain is Cannabidiolic acid synthase, found in Cannabis sativa (Hemp).